The chain runs to 223 residues: Proteasome subunit beta type-1 (223 aa).

The protein belongs to the peptidase T1B family. As to quaternary structure, component of the 20S core complex of the 26S proteasome. The 26S proteasome is composed of a core protease (CP), known as the 20S proteasome, capped at one or both ends by the 19S regulatory particle (RP/PA700). The 20S proteasome core is composed of 28 subunits that are arranged in four stacked rings, resulting in a barrel-shaped structure. The two end rings are each formed by seven alpha subunits, and the two central rings are each formed by seven beta subunits. The catalytic chamber with the active sites is on the inside of the barrel. As to expression, present in all tissues examined. Slightly lower levels in roots.

It localises to the cytoplasm. It is found in the nucleus. Functionally, non-catalytic component of the proteasome, a multicatalytic proteinase complex which is characterized by its ability to cleave peptides with Arg, Phe, Tyr, Leu, and Glu adjacent to the leaving group at neutral or slightly basic pH. The proteasome has an ATP-dependent proteolytic activity. This is Proteasome subunit beta type-1 (PBF1) from Arabidopsis thaliana (Mouse-ear cress).